We begin with the raw amino-acid sequence, 480 residues long: MTLSFTARWRDELPATYTALLPTPLKNARLIWYNDKLAQQLAIPASLFDATNGAGVWGGETLLPGMSPVAQVYSGHQFGVWAGQLGDGRGILLGEQLLAYGSTLDWHLKGAGLTPYSRMGDGRAVLRSTIRESLASEAMHYLGIPTTRALSIVASDTPVQRETQETGAMLMRLAQSHMRFGHFEHFYYRREPEKVQQLADFAIRHYWPQWQDVPEKYALWFEEVAARTGRLIAEWQTVGFSHGVMNTDNMSILGLTIDYGPFGFLDDYDPGFIGNHSDHQGRYRFDNQPLVALWNLQRLAQTLTPFIEIDALNRALDRYQDALLTHYGQRMRQKLGFFTEQKDDNALLNELFSLMAREGSDYTRTFRMLSHTEQQSASSPLRDTFIDRAAFDAWFDRYRARLRTEAVDDALRQQQMQRVNPAVVLRNWLAQRAIDAAEQGDMAELHRLHEVLRQPFTDRDDDYASRPPEWGKRLEVSCSS.

Residues glycine 86, glycine 88, arginine 89, lysine 109, aspartate 121, glycine 122, arginine 172, and arginine 179 each contribute to the ATP site. Aspartate 248 serves as the catalytic Proton acceptor. The Mg(2+) site is built by asparagine 249 and aspartate 258. Residue aspartate 258 coordinates ATP.

This sequence belongs to the SELO family. Mg(2+) is required as a cofactor. Requires Mn(2+) as cofactor.

It carries out the reaction L-seryl-[protein] + ATP = 3-O-(5'-adenylyl)-L-seryl-[protein] + diphosphate. The catalysed reaction is L-threonyl-[protein] + ATP = 3-O-(5'-adenylyl)-L-threonyl-[protein] + diphosphate. The enzyme catalyses L-tyrosyl-[protein] + ATP = O-(5'-adenylyl)-L-tyrosyl-[protein] + diphosphate. It catalyses the reaction L-histidyl-[protein] + UTP = N(tele)-(5'-uridylyl)-L-histidyl-[protein] + diphosphate. It carries out the reaction L-seryl-[protein] + UTP = O-(5'-uridylyl)-L-seryl-[protein] + diphosphate. The catalysed reaction is L-tyrosyl-[protein] + UTP = O-(5'-uridylyl)-L-tyrosyl-[protein] + diphosphate. Nucleotidyltransferase involved in the post-translational modification of proteins. It can catalyze the addition of adenosine monophosphate (AMP) or uridine monophosphate (UMP) to a protein, resulting in modifications known as AMPylation and UMPylation. In Salmonella enteritidis PT4 (strain P125109), this protein is Protein nucleotidyltransferase YdiU.